Reading from the N-terminus, the 313-residue chain is Ribosomal RNA small subunit methyltransferase H (313 aa).

S-adenosyl-L-methionine is bound by residues 35–37 (GGH), Asp-55, Phe-81, Asp-103, and Gln-110.

It belongs to the methyltransferase superfamily. RsmH family.

The protein resides in the cytoplasm. It carries out the reaction cytidine(1402) in 16S rRNA + S-adenosyl-L-methionine = N(4)-methylcytidine(1402) in 16S rRNA + S-adenosyl-L-homocysteine + H(+). Specifically methylates the N4 position of cytidine in position 1402 (C1402) of 16S rRNA. The polypeptide is Ribosomal RNA small subunit methyltransferase H (Pseudomonas aeruginosa (strain ATCC 15692 / DSM 22644 / CIP 104116 / JCM 14847 / LMG 12228 / 1C / PRS 101 / PAO1)).